The chain runs to 498 residues: ATP synthase subunit beta, chloroplastic (498 aa).

172–179 is an ATP binding site; the sequence is GGAGVGKT.

This sequence belongs to the ATPase alpha/beta chains family. F-type ATPases have 2 components, CF(1) - the catalytic core - and CF(0) - the membrane proton channel. CF(1) has five subunits: alpha(3), beta(3), gamma(1), delta(1), epsilon(1). CF(0) has four main subunits: a(1), b(1), b'(1) and c(9-12).

It localises to the plastid. The protein resides in the chloroplast thylakoid membrane. It carries out the reaction ATP + H2O + 4 H(+)(in) = ADP + phosphate + 5 H(+)(out). In terms of biological role, produces ATP from ADP in the presence of a proton gradient across the membrane. The catalytic sites are hosted primarily by the beta subunits. This is ATP synthase subunit beta, chloroplastic from Whiteheadia bifolia (Elephants ears).